Consider the following 208-residue polypeptide: Holliday junction resolvase RecU (208 aa).

The interval 1–30 (MNYPNGKPFNRNKSQVGRTHKGQTSKIDYG) is disordered. Thr87, Asp89, Glu102, and Gln121 together coordinate Mg(2+).

The protein belongs to the RecU family. Requires Mg(2+) as cofactor.

The protein localises to the cytoplasm. The catalysed reaction is Endonucleolytic cleavage at a junction such as a reciprocal single-stranded crossover between two homologous DNA duplexes (Holliday junction).. Its function is as follows. Endonuclease that resolves Holliday junction intermediates in genetic recombination. Cleaves mobile four-strand junctions by introducing symmetrical nicks in paired strands. Promotes annealing of linear ssDNA with homologous dsDNA. Required for DNA repair, homologous recombination and chromosome segregation. The sequence is that of Holliday junction resolvase RecU from Staphylococcus saprophyticus subsp. saprophyticus (strain ATCC 15305 / DSM 20229 / NCIMB 8711 / NCTC 7292 / S-41).